The chain runs to 104 residues: Large ribosomal subunit protein uL24 (104 aa).

Belongs to the universal ribosomal protein uL24 family. In terms of assembly, part of the 50S ribosomal subunit.

Its function is as follows. One of two assembly initiator proteins, it binds directly to the 5'-end of the 23S rRNA, where it nucleates assembly of the 50S subunit. Functionally, one of the proteins that surrounds the polypeptide exit tunnel on the outside of the subunit. This Dichelobacter nodosus (strain VCS1703A) protein is Large ribosomal subunit protein uL24.